The sequence spans 193 residues: dCTP deaminase, dUMP-forming (193 aa).

DCTP-binding positions include 101–106 (KSSLGR), D119, 127–129 (TLE), Q148, Y162, and Q174. The Proton donor/acceptor role is filled by E129. Positions 160 to 193 (TPYGSGSLGSKYQGQRGPTPSKGYLNFSSEQDSD) are disordered. Positions 167-177 (LGSKYQGQRGP) are enriched in polar residues.

This sequence belongs to the dCTP deaminase family. In terms of assembly, homotrimer.

The catalysed reaction is dCTP + 2 H2O = dUMP + NH4(+) + diphosphate. It functions in the pathway pyrimidine metabolism; dUMP biosynthesis; dUMP from dCTP: step 1/1. Functionally, bifunctional enzyme that catalyzes both the deamination of dCTP to dUTP and the hydrolysis of dUTP to dUMP without releasing the toxic dUTP intermediate. This Corynebacterium efficiens (strain DSM 44549 / YS-314 / AJ 12310 / JCM 11189 / NBRC 100395) protein is dCTP deaminase, dUMP-forming.